The chain runs to 581 residues: Bifunctional lycopene cyclase/phytoene synthase (581 aa).

A lycopene beta-cyclase region spans residues 1-243 (MGFDYALVHL…IVFGQLAFDN (243 aa)). A run of 7 helical transmembrane segments spans residues 3–23 (FDYA…LTLL), 35–55 (KVAF…SYLI), 65–85 (HVII…FFVV), 120–140 (LKRL…WFCV), 152–172 (ILIW…QFII), 173–193 (GLPF…LWIV), and 221–241 (IEEA…QLAF). The segment at 250 to 581 (AFPHLFPDPS…RVLVAWRTLN (332 aa)) is phytoene synthase.

This sequence in the N-terminal section; belongs to the lycopene beta-cyclase family. It in the C-terminal section; belongs to the phytoene/squalene synthase family.

The protein localises to the membrane. The catalysed reaction is all-trans-lycopene = gamma-carotene. The enzyme catalyses gamma-carotene = all-trans-beta-carotene. It carries out the reaction 2 (2E,6E,10E)-geranylgeranyl diphosphate = 15-cis-phytoene + 2 diphosphate. Its pathway is carotenoid biosynthesis; beta-carotene biosynthesis. It functions in the pathway carotenoid biosynthesis; phytoene biosynthesis; all-trans-phytoene from geranylgeranyl diphosphate: step 1/1. In terms of biological role, bifunctional enzyme that catalyzes the reactions from geranylgeranyl diphosphate to phytoene (phytoene synthase) and lycopene to beta-carotene via the intermediate gamma-carotene (lycopene cyclase). The sequence is that of Bifunctional lycopene cyclase/phytoene synthase from Leptosphaeria maculans (strain JN3 / isolate v23.1.3 / race Av1-4-5-6-7-8) (Blackleg fungus).